The following is a 149-amino-acid chain: Probable flagellum biosynthesis repressor protein FlbT (149 aa).

This sequence belongs to the FlbT family.

Has a post-transcriptional repressor function in flagellum biogenesis. Associates with the 5'-UTR of fljK mRNA and promotes its degradation. The chain is Probable flagellum biosynthesis repressor protein FlbT from Rhizobium etli (strain CIAT 652).